The primary structure comprises 124 residues: Small ribosomal subunit protein uS13 (124 aa).

The interval 95 to 124 (GLPVRGQRTHTNARTRKGPRRSVMGKRKKA) is disordered.

This sequence belongs to the universal ribosomal protein uS13 family. As to quaternary structure, part of the 30S ribosomal subunit. Forms a loose heterodimer with protein S19. Forms two bridges to the 50S subunit in the 70S ribosome.

Its function is as follows. Located at the top of the head of the 30S subunit, it contacts several helices of the 16S rRNA. In the 70S ribosome it contacts the 23S rRNA (bridge B1a) and protein L5 of the 50S subunit (bridge B1b), connecting the 2 subunits; these bridges are implicated in subunit movement. Contacts the tRNAs in the A and P-sites. This is Small ribosomal subunit protein uS13 from Syntrophobacter fumaroxidans (strain DSM 10017 / MPOB).